Consider the following 306-residue polypeptide: Peroxisome biogenesis factor 2 (306 aa).

The Peroxisomal matrix segment spans residues 1–15 (MAASENNMEEINPVL). Residues 16-42 (RISQLDAIELNKALEQLIWSQFSSCFQ) traverse the membrane as a helical segment. Residues 43-48 (GFKPGL) lie on the Cytoplasmic side of the membrane. The helical transmembrane segment at 49–74 (LTRFEPEIKASLCLFLWRYTIYTKNA) threads the bilayer. The Peroxisomal matrix portion of the chain corresponds to 75 to 98 (TVGQTILNMQYKNDLAVTKKYRPL). Residues 99–125 (NKQQKVWFALFLVGGKWLEERSFDLFS) form a helical membrane-spanning segment. At 126–134 (NHPFGASFQ) the chain is on the cytoplasmic side. A helical membrane pass occupies residues 135–161 (RTKYFLNAISGLLKFGALLNFLIFLQQ). Topologically, residues 162 to 188 (GKFATLTERLLGIRSVFSRPQDVRQVG) are peroxisomal matrix. Residues 189–212 (FEYMNREILWHGFAEFLIFLLPLI) traverse the membrane as a helical segment. Over 213–306 (NTQKLKSKLF…KIEISEVHTL (94 aa)) the chain is Cytoplasmic. Zn(2+) contacts are provided by C245, C248, C260, H262, C265, C268, C281, and C284. The segment at 245–285 (CCLCGEWPAMPHTIGCSHVFCYYCIKSNYMSDMYFTCPKCS) adopts an RING-type zinc-finger fold.

It belongs to the pex2/pex10/pex12 family. Component of the PEX2-PEX10-PEX12 retrotranslocation channel.

Its subcellular location is the peroxisome membrane. The enzyme catalyses [E2 ubiquitin-conjugating enzyme]-S-ubiquitinyl-L-cysteine + [acceptor protein]-L-cysteine = [E2 ubiquitin-conjugating enzyme]-L-cysteine + [acceptor protein]-S-ubiquitinyl-L-cysteine.. It catalyses the reaction S-ubiquitinyl-[E2 ubiquitin-conjugating enzyme]-L-cysteine + [acceptor protein]-L-lysine = [E2 ubiquitin-conjugating enzyme]-L-cysteine + N(6)-ubiquitinyl-[acceptor protein]-L-lysine.. Its pathway is protein modification; protein ubiquitination. In terms of biological role, E3 ubiquitin-protein ligase component of a retrotranslocation channel required for peroxisome organization by mediating export of the PEX5 receptor from peroxisomes to the cytosol, thereby promoting PEX5 recycling. The retrotranslocation channel is composed of PEX2, PEX10 and PEX12; each subunit contributing transmembrane segments that coassemble into an open channel that specifically allows the passage of PEX5 through the peroxisomal membrane. PEX2 also regulates peroxisome organization by acting as a E3 ubiquitin-protein ligase. The sequence is that of Peroxisome biogenesis factor 2 from Xenopus laevis (African clawed frog).